The sequence spans 104 residues: L-rhamnose mutarotase (104 aa).

Substrate is bound at residue Tyr-18. The Proton donor role is filled by His-22. Substrate contacts are provided by residues Tyr-41 and 76–77; that span reads WW.

The protein belongs to the rhamnose mutarotase family. In terms of assembly, homodimer.

It localises to the cytoplasm. It carries out the reaction alpha-L-rhamnose = beta-L-rhamnose. It participates in carbohydrate metabolism; L-rhamnose metabolism. Its function is as follows. Involved in the anomeric conversion of L-rhamnose. The sequence is that of L-rhamnose mutarotase from Escherichia coli O8 (strain IAI1).